A 165-amino-acid chain; its full sequence is Protein-export protein SecB (165 aa).

The protein belongs to the SecB family. As to quaternary structure, homotetramer, a dimer of dimers. One homotetramer interacts with 1 SecA dimer.

It localises to the cytoplasm. In terms of biological role, one of the proteins required for the normal export of preproteins out of the cell cytoplasm. It is a molecular chaperone that binds to a subset of precursor proteins, maintaining them in a translocation-competent state. It also specifically binds to its receptor SecA. The protein is Protein-export protein SecB of Ruegeria pomeroyi (strain ATCC 700808 / DSM 15171 / DSS-3) (Silicibacter pomeroyi).